The sequence spans 558 residues: Cytochrome c oxidase subunit 1-beta (558 aa).

Residues 1–28 lie on the Cytoplasmic side of the membrane; the sequence is MADAAVHGHGDHHDTRGFFTRWFMSTNH. A helical membrane pass occupies residues 29–59; that stretch reads KDIGILYLFTAGIVGLISVCFTVYMRMELQH. The Periplasmic segment spans residues 60–82; that stretch reads PGVQYMCLEGARLIADASAECTP. Cys-66 and Cys-80 are oxidised to a cystine. Residues 83-120 form a helical membrane-spanning segment; the sequence is NGHLWNVMITYHGVLMMFFVVIPALFGGFGNYFMPLHI. Residue His-94 participates in Fe(II)-heme a binding. Over 121–126 the chain is Cytoplasmic; it reads GAPDMA. Residues 127–151 traverse the membrane as a helical segment; that stretch reads FPRLNNLSYWMYVCGVALGVASLLA. Topologically, residues 152-176 are periplasmic; that stretch reads PGGNDQMGSGVGWVLYPPLSTTEAG. The chain crosses the membrane as a helical span at residues 177–206; sequence YSMDLAIFAVHVSGASSILGAINIITTFLN. The Cytoplasmic portion of the chain corresponds to 207-217; sequence MRAPGMTLFKV. The chain crosses the membrane as a helical span at residues 218 to 251; the sequence is PLFAWSVFITAWLILLSLPVLAGAITMLLMDRNF. The Periplasmic portion of the chain corresponds to 252–262; it reads GTQFFDPAGGG. Residues 263 to 299 form a helical membrane-spanning segment; it reads DPVLYQHILWFFGHPEVYIIILPGFGIISHVISTFAK. Cu cation-binding residues include His-276 and Tyr-280. Residues 276-280 constitute a cross-link (1'-histidyl-3'-tyrosine (His-Tyr)); the sequence is HPEVY. The Cytoplasmic segment spans residues 300 to 303; the sequence is KPIF. The chain crosses the membrane as a helical span at residues 304-331; it reads GYLPMVLAMAAIGILGFVVWAHHMYTAG. Cu cation-binding residues include His-325 and His-326. A topological domain (periplasmic) is located at residue Met-332. Residues 333-364 traverse the membrane as a helical segment; that stretch reads SLTQQAYFMLATMTIAVPTGIKVFSWIATMWG. Topologically, residues 365 to 369 are cytoplasmic; that stretch reads GSIEF. The chain crosses the membrane as a helical span at residues 370-395; it reads KTPMLWAFGFLFLFTVGGVTGVVLSQ. Residues 396-404 lie on the Periplasmic side of the membrane; it reads APLDRVYHD. Residues 405–437 traverse the membrane as a helical segment; sequence TYYVVAHFHYVMSLGAVFGIFAGVYYWIGKMSG. Residue His-411 coordinates heme a3. A Fe(II)-heme a-binding site is contributed by His-413. Residues 438 to 440 lie on the Cytoplasmic side of the membrane; it reads RQY. The chain crosses the membrane as a helical span at residues 441 to 469; it reads PEWAGQLHFWMMFIGSNLIFFPQHFLGRQ. The Periplasmic segment spans residues 470-478; sequence GMPRRYIDY. A helical membrane pass occupies residues 479–514; sequence PVEFAYWNNISSIGAYISFASFLFFIGIVFYTLFAG. Residues 515-558 are Cytoplasmic-facing; sequence KRVNVPNYWNEHADTLEWTLPSPPPEHTFETLPKREDWDRAHAH.

The protein belongs to the heme-copper respiratory oxidase family. Requires Cu(2+) as cofactor. Heme is required as a cofactor. Post-translationally, his-276 and Tyr-280 are involved in the formation of a copper-coordinated covalent cross-link at the active site of the catalytic subunit I.

The protein localises to the cell inner membrane. It carries out the reaction 4 Fe(II)-[cytochrome c] + O2 + 8 H(+)(in) = 4 Fe(III)-[cytochrome c] + 2 H2O + 4 H(+)(out). The protein operates within energy metabolism; oxidative phosphorylation. Functionally, subunit I and II form the functional core of the enzyme complex. Electrons originating in cytochrome c are transferred via heme a and Cu(A) to the binuclear center formed by heme a3 and Cu(B). This cytochrome c oxidase shows proton pump activity across the membrane in addition to the electron transfer. The sequence is that of Cytochrome c oxidase subunit 1-beta (ctaDII) from Paracoccus denitrificans.